Reading from the N-terminus, the 179-residue chain is Guanosine-3',5'-bis(diphosphate) 3'-pyrophosphohydrolase MESH1 (179 aa).

At glycine 2 the chain carries N-acetylglycine. At lysine 25 the chain carries N6-acetyllysine. The region spanning 32 to 127 (YINHPIGVAR…VKLADKLYNL (96 aa)) is the HD domain. Histidine 35, histidine 61, and aspartate 62 together coordinate Mn(2+). Active-site nucleophile residues include glutamate 65 and aspartate 66. Position 97 is an N6-acetyllysine (lysine 97). Aspartate 122 lines the Mn(2+) pocket. Lysine 123 is subject to N6-acetyllysine.

The protein belongs to the MESH1 family. The cofactor is Mn(2+).

It carries out the reaction guanosine 3',5'-bis(diphosphate) + H2O = GDP + diphosphate + H(+). Functionally, ppGpp hydrolyzing enzyme involved in starvation response. The polypeptide is Guanosine-3',5'-bis(diphosphate) 3'-pyrophosphohydrolase MESH1 (Hddc3) (Mus musculus (Mouse)).